Consider the following 172-residue polypeptide: Large ribosomal subunit protein eL20A (172 aa).

Residue Ser32 is modified to Phosphoserine. Glycyl lysine isopeptide (Lys-Gly) (interchain with G-Cter in ubiquitin) cross-links involve residues Lys125, Lys131, and Lys149.

The protein belongs to the eukaryotic ribosomal protein eL20 family. As to quaternary structure, component of the large ribosomal subunit (LSU). Mature yeast ribosomes consist of a small (40S) and a large (60S) subunit. The 40S small subunit contains 1 molecule of ribosomal RNA (18S rRNA) and 33 different proteins (encoded by 57 genes). The large 60S subunit contains 3 rRNA molecules (25S, 5.8S and 5S rRNA) and 46 different proteins (encoded by 81 genes). eL20 forms multiple interactions with RNA and proteins in the central protuberance, connecting components of core functional centers that are located far apart.

Its subcellular location is the cytoplasm. Its function is as follows. Component of the ribosome, a large ribonucleoprotein complex responsible for the synthesis of proteins in the cell. The small ribosomal subunit (SSU) binds messenger RNAs (mRNAs) and translates the encoded message by selecting cognate aminoacyl-transfer RNA (tRNA) molecules. The large subunit (LSU) contains the ribosomal catalytic site termed the peptidyl transferase center (PTC), which catalyzes the formation of peptide bonds, thereby polymerizing the amino acids delivered by tRNAs into a polypeptide chain. The nascent polypeptides leave the ribosome through a tunnel in the LSU and interact with protein factors that function in enzymatic processing, targeting, and the membrane insertion of nascent chains at the exit of the ribosomal tunnel. The sequence is that of Large ribosomal subunit protein eL20A from Saccharomyces cerevisiae (strain ATCC 204508 / S288c) (Baker's yeast).